A 67-amino-acid polypeptide reads, in one-letter code: Protein LITTLE ZIPPER 3 (67 aa).

Positions 14–59 (YIMKENERLRKKAELLNQENQQLLFQLKQKLSKTKNSNNGSNNDNK) form a coiled coil. The tract at residues 42-67 (QKLSKTKNSNNGSNNDNKSSSASGQS) is disordered.

Interacts with REV. Interacts with ATBH-8, ATBH-9, ATB-14 and ATB-15. In terms of tissue distribution, expressed in the adaxial epidermis of the cotyledons and leaves, and in the vascular cylinder of wild-type torpedo stage embryos. Confined in the central zone and the organizing center in the shoot apical meristem.

It is found in the nucleus. Functionally, competitive inhibitor of the HD-ZIPIII transcription factors in shoot apical meristem (SAM) development. Acts by forming non-functional heterodimers. Part of a negative feedback loop. Involved in SAM development and lateral organ patterning. Essential for proper functioning of stem cells in the SAM. This chain is Protein LITTLE ZIPPER 3, found in Arabidopsis thaliana (Mouse-ear cress).